The primary structure comprises 1091 residues: ATP-dependent RNA helicase ddx54 (1091 aa).

Disordered stretches follow at residues 1–63 (MVKP…KEEF) and 150–231 (DNSN…KTGG). A compositionally biased stretch (basic and acidic residues) spans 26 to 35 (MKGKKLETKS). Polar residues predominate over residues 150-161 (DNSNFDNNGDQF). Residues 196–207 (KKEEIESSEKFE) show a composition bias toward basic and acidic residues. The Q motif signature appears at 230–258 (GGFQSMDLTKNLLKAILKKGFNVPTPIQR). The region spanning 261–433 (IPMILDGHDI…RAGLNNPKLI (173 aa)) is the Helicase ATP-binding domain. Position 274 to 281 (274 to 281 (ARTGSGKT)) interacts with ATP. The DEAD box signature appears at 381-384 (DEAD). The Helicase C-terminal domain maps to 478-632 (TETTTTTTTN…KFQYEGQTIN (155 aa)). Disordered stretches follow at residues 801–896 (EEML…TPEN) and 933–1091 (KRKG…KSRK). Residues 814-823 (DNNKDIKMNE) show a composition bias toward basic and acidic residues. Positions 824–855 (NDDENDDDDEEGENDDDEEEENEKDEDDEEDE) are enriched in acidic residues. Composition is skewed to basic and acidic residues over residues 865-874 (ESSDKNDNNK), 944-975 (DADR…EEWK), and 1008-1019 (QGREKEKKDNKA). Basic residues predominate over residues 1020-1029 (SHAKGSHGLK). The span at 1031–1052 (RPSELKDKNQISKNRSEKERKM) shows a compositional bias: basic and acidic residues. Gly residues predominate over residues 1068–1079 (SGGGGGGKGSKF).

It belongs to the DEAD box helicase family. DDX54/DBP10 subfamily.

Its subcellular location is the nucleus. The protein resides in the nucleolus. The enzyme catalyses ATP + H2O = ADP + phosphate + H(+). Functionally, ATP-binding RNA helicase which may be involved in the ribosome biogenesis. This chain is ATP-dependent RNA helicase ddx54 (helA), found in Dictyostelium discoideum (Social amoeba).